The following is a 184-amino-acid chain: Nutrient stress-induced DNA-binding protein (184 aa).

The protein belongs to the Dps family. Hexamer.

Involved in protection of chromosomal DNA from damage under nutrient-limited and oxidative stress conditions. Binds heme. The protein is Nutrient stress-induced DNA-binding protein (dpsA) of Nostoc sp. (strain PCC 7120 / SAG 25.82 / UTEX 2576).